Here is a 135-residue protein sequence, read N- to C-terminus: Ribosome-binding factor A (135 aa).

It belongs to the RbfA family. In terms of assembly, monomer. Binds 30S ribosomal subunits, but not 50S ribosomal subunits or 70S ribosomes.

The protein resides in the cytoplasm. In terms of biological role, one of several proteins that assist in the late maturation steps of the functional core of the 30S ribosomal subunit. Associates with free 30S ribosomal subunits (but not with 30S subunits that are part of 70S ribosomes or polysomes). Required for efficient processing of 16S rRNA. May interact with the 5'-terminal helix region of 16S rRNA. In Rhodopseudomonas palustris (strain HaA2), this protein is Ribosome-binding factor A.